Here is a 271-residue protein sequence, read N- to C-terminus: 3-methyl-2-oxobutanoate hydroxymethyltransferase 2 (271 aa).

Positions 53 and 92 each coordinate Mg(2+). 3-methyl-2-oxobutanoate contacts are provided by residues 53-54 (DS), Asp-92, and Lys-120. Glu-122 is a binding site for Mg(2+). The Proton acceptor role is filled by Glu-189.

The protein belongs to the PanB family. As to quaternary structure, homodecamer; pentamer of dimers. It depends on Mg(2+) as a cofactor.

It localises to the cytoplasm. The catalysed reaction is 3-methyl-2-oxobutanoate + (6R)-5,10-methylene-5,6,7,8-tetrahydrofolate + H2O = 2-dehydropantoate + (6S)-5,6,7,8-tetrahydrofolate. It participates in cofactor biosynthesis; (R)-pantothenate biosynthesis; (R)-pantoate from 3-methyl-2-oxobutanoate: step 1/2. In terms of biological role, catalyzes the reversible reaction in which hydroxymethyl group from 5,10-methylenetetrahydrofolate is transferred onto alpha-ketoisovalerate to form ketopantoate. The polypeptide is 3-methyl-2-oxobutanoate hydroxymethyltransferase 2 (Burkholderia lata (strain ATCC 17760 / DSM 23089 / LMG 22485 / NCIMB 9086 / R18194 / 383)).